We begin with the raw amino-acid sequence, 145 residues long: Transcription antitermination protein NusB (145 aa).

It belongs to the NusB family.

In terms of biological role, involved in transcription antitermination. Required for transcription of ribosomal RNA (rRNA) genes. Binds specifically to the boxA antiterminator sequence of the ribosomal RNA (rrn) operons. This chain is Transcription antitermination protein NusB, found in Paraburkholderia phymatum (strain DSM 17167 / CIP 108236 / LMG 21445 / STM815) (Burkholderia phymatum).